The primary structure comprises 635 residues: Biosynthetic arginine decarboxylase (635 aa).

Lys100 carries the N6-(pyridoxal phosphate)lysine modification. 282–292 (LDIGGGLGVDY) serves as a coordination point for substrate.

This sequence belongs to the Orn/Lys/Arg decarboxylase class-II family. SpeA subfamily. Mg(2+) serves as cofactor. It depends on pyridoxal 5'-phosphate as a cofactor.

It carries out the reaction L-arginine + H(+) = agmatine + CO2. Its pathway is amine and polyamine biosynthesis; agmatine biosynthesis; agmatine from L-arginine: step 1/1. Its function is as follows. Catalyzes the biosynthesis of agmatine from arginine. This chain is Biosynthetic arginine decarboxylase, found in Geotalea uraniireducens (strain Rf4) (Geobacter uraniireducens).